The sequence spans 1293 residues: Phosphoribosylformylglycinamidine synthase (1293 aa).

Residues G305–D316 and A676 each bind ATP. The interval G305 to A328 is disordered. Mg(2+) is bound by residues D677, E716, N720, and D884. S886 serves as a coordination point for ATP. Residues M1040–G1293 form the Glutamine amidotransferase type-1 domain. C1133 serves as the catalytic Nucleophile. Residues H1258 and E1260 contribute to the active site.

This sequence in the N-terminal section; belongs to the FGAMS family. Monomer.

It is found in the cytoplasm. It catalyses the reaction N(2)-formyl-N(1)-(5-phospho-beta-D-ribosyl)glycinamide + L-glutamine + ATP + H2O = 2-formamido-N(1)-(5-O-phospho-beta-D-ribosyl)acetamidine + L-glutamate + ADP + phosphate + H(+). It functions in the pathway purine metabolism; IMP biosynthesis via de novo pathway; 5-amino-1-(5-phospho-D-ribosyl)imidazole from N(2)-formyl-N(1)-(5-phospho-D-ribosyl)glycinamide: step 1/2. Functionally, phosphoribosylformylglycinamidine synthase involved in the purines biosynthetic pathway. Catalyzes the ATP-dependent conversion of formylglycinamide ribonucleotide (FGAR) and glutamine to yield formylglycinamidine ribonucleotide (FGAM) and glutamate. The polypeptide is Phosphoribosylformylglycinamidine synthase (Shewanella sp. (strain MR-7)).